The sequence spans 381 residues: Alcohol dehydrogenase class-3 (381 aa).

Cysteine 49 is a Zn(2+) binding site. Residue histidine 50 participates in NAD(+) binding. An alcohol-binding residues include threonine 51 and histidine 71. Positions 71, 72, 101, 104, 107, 115, and 179 each coordinate Zn(2+). Residues 204 to 209 (GLGTVG), aspartate 228, lysine 233, isoleucine 274, 297 to 299 (VGV), 322 to 324 (TAF), and arginine 374 contribute to the NAD(+) site.

This sequence belongs to the zinc-containing alcohol dehydrogenase family. Class-III subfamily. As to quaternary structure, homodimer. It depends on Zn(2+) as a cofactor.

The protein resides in the cytoplasm. The catalysed reaction is a primary alcohol + NAD(+) = an aldehyde + NADH + H(+). The enzyme catalyses a secondary alcohol + NAD(+) = a ketone + NADH + H(+). It catalyses the reaction S-(hydroxymethyl)glutathione + NADP(+) = S-formylglutathione + NADPH + H(+). It carries out the reaction S-(hydroxymethyl)glutathione + NAD(+) = S-formylglutathione + NADH + H(+). The sequence is that of Alcohol dehydrogenase class-3 from Oryza sativa subsp. japonica (Rice).